A 598-amino-acid polypeptide reads, in one-letter code: MDDYSLDEFRRRWQEELAQAQAPKKRRRPEAAERRARRPEVGSGRGEQASGDPALAQRLLEGAGRPPAARATRAEGQDVASRSRSPLAREGAGGGEQLVDQLIRDLNEMNDVPFFDIQLPYELAINIFQYLDRKELGRCAQVSKTWKVIAEDEVLWYRLCQQEGHLPDSSISDYSCWKLIFQECRAKEHMLRTNWKNRKGAVSELEHVPDTVLCDVHSHDGVVIAGYTSGDVRVWDTRTWDYVAPFLESEDEEDEPGMQPNVSFVRINSSLAVAAYEDGFLNIWDLRTGKYPVHRFEHDARIQALALSQDDATVATASAFDVVMLSPNEEGYWQIAAEFEVPKLVQYLEIVPETRRYPVAVAAAGDLMYLLKAEDSARTLLYAHGPPVTCLDVSANQVAFGVQGLGWVYEGSKILVYSLEAGRRLLKLGNVLRDFTCVNLSDSPPNLMVSGNMDGRVRIHDLRSGNIALSLSAHQLRVSAVQMDDWKIVSGGEEGLVSVWDYRMNQKLWEVYSGHPVQHISFSSHSLITANVPYQTVMRNADLDSFTTHRRHRGLIRAYEFAVDQLAFQSPLPVCRSSCDAMATHYYDLALAFPYNHV.

The residue at position 1 (Met-1) is an N-acetylmethionine. The interval 17-93 (LAQAQAPKKR…RSPLAREGAG (77 aa)) is disordered. A compositionally biased stretch (basic and acidic residues) spans 29-40 (PEAAERRARRPE). Residues 61–71 (EGAGRPPAARA) are compositionally biased toward low complexity. 2 positions are modified to phosphoserine: Ser-83 and Ser-85. Residues 113-159 (PFFDIQLPYELAINIFQYLDRKELGRCAQVSKTWKVIAEDEVLWYRL) form the F-box domain. WD repeat units lie at residues 201-250 (AVSE…LESE), 259-299 (QPNV…FEHD), 300-340 (ARIQ…AEFE), 341-383 (VPKL…LLYA), 384-429 (HGPP…LKLG), 430-475 (NVLR…SAHQ), 476-513 (LRVS…EVYS), and 514-561 (GHPV…AYEF).

In terms of assembly, component of the Cul7-RING(FBXW8) complex consisting of CUL7, RBX1, SKP1 and FBXW8; within the complex interacts with CUL7 and SKP1. Interacts with GLMN isoform 1. Interacts with OBSL1, CUL1, CUL2, CCT6B, PFDN5, CCT2, CCT3, CCT6A, CCT7, VBP1, CCDC8, ARF1, TRIP13, PDCD5 and GORASP1. Interacts with MAP4K1/HPK1 (when autophosphorylated). Associated component of the 3M complex. Interacts with POUF51 (when phosphorylated on 'Ser-355'). Phosphorylation at Ser-85 by mTORC2 promotes FBXW8 stabilization, allowing its translocation to the cytosol in response to insulin.

The protein localises to the cytoplasm. The protein resides in the perinuclear region. Its subcellular location is the golgi apparatus. It participates in protein modification; protein ubiquitination. Its function is as follows. Substrate-recognition component of the Cul7-RING(FBXW8) ubiquitin ligase complex, which mediates the ubiquitination and subsequent proteasomal degradation of target proteins. The Cul7-RING(FBXW8) complex mediates ubiquitination and consequent degradation of GORASP1, acting as a component of the ubiquitin ligase pathway that regulates Golgi morphogenesis and dendrite patterning in brain. Mediates ubiquitination and degradation of IRS1 in a mTOR-dependent manner: the Cul7-RING(FBXW8) complex recognizes and binds IRS1 previously phosphorylated by S6 kinase (RPS6KB1 or RPS6KB2). The Cul7-RING(FBXW8) complex also mediates ubiquitination of MAP4K1/HPK1: recognizes and binds autophosphorylated MAP4K1/HPK1, leading to its degradation, thereby affecting cell proliferation and differentiation. The Cul7-RING(FBXW8) complex also mediates ubiquitination of phosphorylated cyclin-D1 (CCND1). The Cul7-RING(FBXW8) complex is however not a major regulator of CCND1 stability during the G1/S transition. Associated component of the 3M complex, suggesting that it mediates some of 3M complex functions. The polypeptide is F-box/WD repeat-containing protein 8 (Homo sapiens (Human)).